The sequence spans 560 residues: S100P-binding protein (560 aa).

Disordered regions lie at residues 259–292 (SDIP…ESTP) and 313–400 (SSSS…GKSF). The segment covering 313 to 352 (SSSSLQLPETSLASSTEPSPSLQLSASSVTAMNGQNNSNK) has biased composition (polar residues). A compositionally biased stretch (basic and acidic residues) spans 378-387 (QKVEPKKNKP).

It is found in the nucleus. The chain is S100P-binding protein (s100pbp) from Xenopus laevis (African clawed frog).